The following is a 413-amino-acid chain: DNA primase DnaG (413 aa).

One can recognise a Toprim domain in the interval 168-246; sequence PNLIIVEGRA…KIDYVARAPV (79 aa). Residues Glu-174, Asp-219, and Asp-221 each contribute to the Mg(2+) site.

Belongs to the archaeal DnaG primase family. As to quaternary structure, forms a ternary complex with MCM helicase and DNA. Component of the archaeal exosome complex. The cofactor is Mg(2+).

The enzyme catalyses ssDNA + n NTP = ssDNA/pppN(pN)n-1 hybrid + (n-1) diphosphate.. Its function is as follows. RNA polymerase that catalyzes the synthesis of short RNA molecules used as primers for DNA polymerase during DNA replication. Also part of the exosome, which is a complex involved in RNA degradation. Acts as a poly(A)-binding protein that enhances the interaction between heteromeric, adenine-rich transcripts and the exosome. The protein is DNA primase DnaG of Metallosphaera sedula (strain ATCC 51363 / DSM 5348 / JCM 9185 / NBRC 15509 / TH2).